Consider the following 335-residue polypeptide: Replication factor C subunit 4 (335 aa).

Residue 56–63 participates in ATP binding; sequence SGPPGTGK.

The protein belongs to the activator 1 small subunits family. As to quaternary structure, heterotetramer of subunits RFC2, RFC3, RFC4 and RFC5 that can form a complex with RFC1. Expressed in roots, leaves, shoot apical meristem (SAM), flag leaves and panicles.

It is found in the nucleus. Its function is as follows. May be involved in DNA replication and thus regulate cell proliferation. The chain is Replication factor C subunit 4 (RFC4) from Oryza sativa subsp. japonica (Rice).